A 152-amino-acid polypeptide reads, in one-letter code: Endoribonuclease YbeY (152 aa).

H113, H117, and H123 together coordinate Zn(2+).

It belongs to the endoribonuclease YbeY family. The cofactor is Zn(2+).

The protein resides in the cytoplasm. Single strand-specific metallo-endoribonuclease involved in late-stage 70S ribosome quality control and in maturation of the 3' terminus of the 16S rRNA. In Acidovorax sp. (strain JS42), this protein is Endoribonuclease YbeY.